The following is an 83-amino-acid chain: Beta-toxin Ct25 (83 aa).

The signal sequence occupies residues 1-18 (MKVLILIIASVLLIGVEC). Positions 19-81 (KDGYPKNSEG…VWDSATNKCG (63 aa)) constitute an LCN-type CS-alpha/beta domain. Cystine bridges form between Cys-29/Cys-80, Cys-33/Cys-54, Cys-40/Cys-61, and Cys-44/Cys-63. A Glycine amide modification is found at Gly-81.

It belongs to the long (4 C-C) scorpion toxin superfamily. Sodium channel inhibitor family. Beta subfamily. In terms of tissue distribution, expressed by the venom gland.

Its subcellular location is the secreted. Functionally, beta toxins bind voltage-independently at site-4 of sodium channels (Nav) and shift the voltage of activation toward more negative potentials thereby affecting sodium channel activation and promoting spontaneous and repetitive firing. The protein is Beta-toxin Ct25 of Centruroides tecomanus (Scorpion).